The chain runs to 380 residues: Fibromodulin (380 aa).

A signal peptide spans 1–18 (MRWANILLVAGLCRASLG). Residues 71–109 (EAQQASSWQCPQECDCPPNFSSAMYCDTRNLRYLPFVPT) form the LRRNT domain. Asparagine 89 carries an N-linked (GlcNAc...) asparagine glycan. 8 LRR repeats span residues 110–131 (RMKYVYFQNNQITAIQEGAFDN), 134–147 (ELEWLALHNNQISS), 160–180 (NLERLYMNNNNLTKMPSPLPR), 181–202 (SLRELHLSYNQISKVPSNALEG), 205–227 (NLTALYLSHNYIFEMGASLKGLK), 228–248 (SLILADLSYNHLRKVPDGLPM), 249–270 (ALEQLYLEYNYINAIPDDYFKV), and 273–293 (KLLYVRMSHNSLTNQGLSTNT). Asparagine 131 is a glycosylation site (N-linked (GlcNAc...) (keratan sulfate) asparagine). An N-linked (GlcNAc...) (keratan sulfate) asparagine glycan is attached at asparagine 170. N-linked (GlcNAc...) (keratan sulfate) asparagine glycosylation occurs at asparagine 205. Residue asparagine 295 is glycosylated (N-linked (GlcNAc...) (keratan sulfate) asparagine). LRR repeat units lie at residues 298 to 317 (SILELDLSYNRLQKIPRVST) and 318 to 339 (NLENLYLQGNQINEFSISSFCT). A disulfide bridge connects residues cysteine 338 and cysteine 371. Asparagine 345 carries an N-linked (GlcNAc...) asparagine glycan. One copy of the LRR 11 repeat lies at 348–371 (RLQVLRLDGNEIKRNAMPPDAPLC).

The protein belongs to the small leucine-rich proteoglycan (SLRP) family. SLRP class II subfamily. Binds to type I and type II collagen. In terms of processing, binds keratan sulfate chains.

It is found in the secreted. It localises to the extracellular space. The protein localises to the extracellular matrix. Its function is as follows. Affects the rate of fibrils formation. May have a primary role in collagen fibrillogenesis. The chain is Fibromodulin (FMOD) from Gallus gallus (Chicken).